Consider the following 632-residue polypeptide: Chaperone protein DnaK (632 aa).

Position 199 is a phosphothreonine; by autocatalysis (threonine 199). Positions 597-611 (AAQQAGQAEGQAAQE) are enriched in low complexity. The tract at residues 597-632 (AAQQAGQAEGQAAQEPSQSTGNAQAEATDAEYEEVK) is disordered. The segment covering 612 to 621 (PSQSTGNAQA) has biased composition (polar residues).

It belongs to the heat shock protein 70 family.

Its function is as follows. Acts as a chaperone. In Amoebophilus asiaticus (strain 5a2), this protein is Chaperone protein DnaK.